A 392-amino-acid chain; its full sequence is NAD(P)H-quinone oxidoreductase subunit H, chloroplastic (392 aa).

This sequence belongs to the complex I 49 kDa subunit family. NDH is composed of at least 16 different subunits, 5 of which are encoded in the nucleus.

It is found in the plastid. Its subcellular location is the chloroplast thylakoid membrane. It carries out the reaction a plastoquinone + NADH + (n+1) H(+)(in) = a plastoquinol + NAD(+) + n H(+)(out). The enzyme catalyses a plastoquinone + NADPH + (n+1) H(+)(in) = a plastoquinol + NADP(+) + n H(+)(out). Functionally, NDH shuttles electrons from NAD(P)H:plastoquinone, via FMN and iron-sulfur (Fe-S) centers, to quinones in the photosynthetic chain and possibly in a chloroplast respiratory chain. The immediate electron acceptor for the enzyme in this species is believed to be plastoquinone. Couples the redox reaction to proton translocation, and thus conserves the redox energy in a proton gradient. This Marchantia polymorpha (Common liverwort) protein is NAD(P)H-quinone oxidoreductase subunit H, chloroplastic.